Reading from the N-terminus, the 447-residue chain is Phosphoglucosamine mutase (447 aa).

The Phosphoserine intermediate role is filled by Ser-107. Residues Ser-107, Asp-246, Asp-248, and Asp-250 each coordinate Mg(2+). Phosphoserine is present on Ser-107.

The protein belongs to the phosphohexose mutase family. It depends on Mg(2+) as a cofactor. Activated by phosphorylation.

The catalysed reaction is alpha-D-glucosamine 1-phosphate = D-glucosamine 6-phosphate. Catalyzes the conversion of glucosamine-6-phosphate to glucosamine-1-phosphate. This chain is Phosphoglucosamine mutase, found in Ralstonia pickettii (strain 12J).